The primary structure comprises 318 residues: tRNA uridine(34) hydroxylase (318 aa).

The Rhodanese domain maps to 123–217 (EDDDTVIIDA…YGKDPETKGQ (95 aa)). Catalysis depends on Cys-177, which acts as the Cysteine persulfide intermediate.

The protein belongs to the TrhO family.

It carries out the reaction uridine(34) in tRNA + AH2 + O2 = 5-hydroxyuridine(34) in tRNA + A + H2O. Catalyzes oxygen-dependent 5-hydroxyuridine (ho5U) modification at position 34 in tRNAs. This chain is tRNA uridine(34) hydroxylase, found in Staphylococcus aureus (strain MRSA252).